The following is a 307-amino-acid chain: MKNLQQRGHLLTEQVNPNSHNLDQLSSLELVDLFNQEDKQTLKAIASSRLQLAQAVDMTTKALSQGGKLFYVGAGTSGRLGVLDAAECPPTFCTSPELVQGIIAGGANALLRSSEDLEDSWEDGNEAIASHNITNLDVIVGITAGGTTPYVHGALEGAKQRAAKTIFITCVPVEQFSIKVDVDIRLLVGPELLSGSTRLKAGTVTKMALNILSTGVMVRLGKVYGNRMIDVAIKNSKLRDRALRIIEDLTELSRDEAEELLNKSGDSVKLALLMHWSNLKKEEGDRVLSEYQGNLRAAMKNVSFSTE.

One can recognise an SIS domain in the interval 59–222 (TTKALSQGGK…STGVMVRLGK (164 aa)). Residue glutamate 87 is the Proton donor of the active site. Residue glutamate 118 is part of the active site.

Belongs to the GCKR-like family. MurNAc-6-P etherase subfamily. Homodimer.

The catalysed reaction is N-acetyl-D-muramate 6-phosphate + H2O = N-acetyl-D-glucosamine 6-phosphate + (R)-lactate. It participates in amino-sugar metabolism; N-acetylmuramate degradation. In terms of biological role, specifically catalyzes the cleavage of the D-lactyl ether substituent of MurNAc 6-phosphate, producing GlcNAc 6-phosphate and D-lactate. The chain is N-acetylmuramic acid 6-phosphate etherase from Trichodesmium erythraeum (strain IMS101).